Here is a 366-residue protein sequence, read N- to C-terminus: Histone-lysine N-methyltransferase SETD7 (366 aa).

MORN repeat units follow at residues 36–58 (FEGNFVHGEKNGRGKFFFFDGST), 59–81 (LEGYYVDDALQGQGVYTYEDGGV), and 106–128 (FKGQYKDNIRHGVCWIYYPDGGS). Residues 214–336 (ERVYVAESLI…ADEELTVAYG (123 aa)) form the SET domain. S-adenosyl-L-methionine is bound by residues 226-228 (AGE), Asn296, His297, and Glu356.

It belongs to the class V-like SAM-binding methyltransferase superfamily. Histone-lysine methyltransferase family. SET7 subfamily. In terms of assembly, interacts with IPF1/PDX-1. In terms of tissue distribution, widely expressed. Expressed in pancreatic islets.

The protein localises to the nucleus. The protein resides in the chromosome. It carries out the reaction L-lysyl(4)-[histone H3] + S-adenosyl-L-methionine = N(6)-methyl-L-lysyl(4)-[histone H3] + S-adenosyl-L-homocysteine + H(+). The catalysed reaction is L-lysyl-[protein] + S-adenosyl-L-methionine = N(6)-methyl-L-lysyl-[protein] + S-adenosyl-L-homocysteine + H(+). In terms of biological role, histone methyltransferase that specifically monomethylates 'Lys-4' of histone H3. H3 'Lys-4' methylation represents a specific tag for epigenetic transcriptional activation. Plays a central role in the transcriptional activation of genes such as collagenase or insulin. Recruited by IPF1/PDX-1 to the insulin promoter, leading to activate transcription. Also has methyltransferase activity toward non-histone proteins such as CGAS, p53/TP53, TAF10, and possibly TAF7 by recognizing and binding the [KR]-[STA]-K in substrate proteins. Monomethylates 'Lys-189' of TAF10, leading to increase the affinity of TAF10 for RNA polymerase II. Monomethylates 'Lys-372' of p53/TP53, stabilizing p53/TP53 and increasing p53/TP53-mediated transcriptional activation. Monomethylates 'Lys-491' of CGAS, promoting interaction between SGF29 and CGAS. This is Histone-lysine N-methyltransferase SETD7 (SETD7) from Homo sapiens (Human).